A 164-amino-acid chain; its full sequence is CB1 cannabinoid receptor-interacting protein 1 (164 aa).

This sequence belongs to the CNRIP family. In terms of assembly, interacts with the cannabinoid receptor CNR1 (via C-terminus). Does not interact with cannabinoid receptor CNR2.

Its function is as follows. Suppresses cannabinoid receptor CNR1-mediated tonic inhibition of voltage-gated calcium channels. The polypeptide is CB1 cannabinoid receptor-interacting protein 1 (CNRIP1) (Bos taurus (Bovine)).